Reading from the N-terminus, the 237-residue chain is DNA repair protein RecO (237 aa).

It belongs to the RecO family.

Functionally, involved in DNA repair and RecF pathway recombination. This is DNA repair protein RecO from Actinobacillus succinogenes (strain ATCC 55618 / DSM 22257 / CCUG 43843 / 130Z).